An 83-amino-acid polypeptide reads, in one-letter code: Normal mucosa of esophagus-specific gene 1 protein (83 aa).

It belongs to the complex I NDUFA4 subunit family.

Its subcellular location is the nucleus. This is Normal mucosa of esophagus-specific gene 1 protein (Nmes1) from Rattus norvegicus (Rat).